The primary structure comprises 854 residues: Protein mono-ADP-ribosyltransferase PARP8 (854 aa).

2 disordered regions span residues 113 to 138 and 291 to 310; these read NGEE…EFYY and SYPP…EQDG. Over residues 123 to 135 the composition is skewed to acidic residues; the sequence is VEEDSEGDNDSEE. ADP-ribosylcysteine occurs at positions 332, 367, 376, and 395. Residues 617 to 844 form the PARP catalytic domain; it reads EMTQAPYLEI…QEGGIHKEIL (228 aa). Residues 750–777 form a disordered region; sequence QKVSAKDEPASSSKSSNTSQSQKKGQQS. The span at 760–777 shows a compositional bias: low complexity; sequence SSSKSSNTSQSQKKGQQS.

The protein belongs to the ARTD/PARP family. Post-translationally, auto-mono-ADP-ribosylated.

The enzyme catalyses L-cysteinyl-[protein] + NAD(+) = S-(ADP-D-ribosyl)-L-cysteinyl-[protein] + nicotinamide + H(+). Its function is as follows. Mono-ADP-ribosyltransferase that mediates mono-ADP-ribosylation of target proteins. The chain is Protein mono-ADP-ribosyltransferase PARP8 from Homo sapiens (Human).